Here is a 400-residue protein sequence, read N- to C-terminus: Argininosuccinate synthase (400 aa).

Residues 6 to 14 and A33 each bind ATP; that span reads AYSGGLDTS. L-citrulline is bound by residues Y84 and S89. G114 provides a ligand contact to ATP. 3 residues coordinate L-aspartate: T116, N120, and D121. N120 lines the L-citrulline pocket. L-citrulline contacts are provided by R124, S173, S182, E258, and Y270.

It belongs to the argininosuccinate synthase family. Type 1 subfamily. Homotetramer.

It is found in the cytoplasm. The enzyme catalyses L-citrulline + L-aspartate + ATP = 2-(N(omega)-L-arginino)succinate + AMP + diphosphate + H(+). Its pathway is amino-acid biosynthesis; L-arginine biosynthesis; L-arginine from L-ornithine and carbamoyl phosphate: step 2/3. In Thermus thermophilus (strain ATCC 27634 / DSM 579 / HB8), this protein is Argininosuccinate synthase.